The sequence spans 101 residues: NAD(P)H-quinone oxidoreductase subunit 4L, chloroplastic (101 aa).

Transmembrane regions (helical) follow at residues 2 to 22 and 61 to 81; these read MFEH…YGLI and IFSI…LAIV.

The protein belongs to the complex I subunit 4L family. In terms of assembly, NDH is composed of at least 16 different subunits, 5 of which are encoded in the nucleus.

It localises to the plastid. The protein localises to the chloroplast thylakoid membrane. The catalysed reaction is a plastoquinone + NADH + (n+1) H(+)(in) = a plastoquinol + NAD(+) + n H(+)(out). It carries out the reaction a plastoquinone + NADPH + (n+1) H(+)(in) = a plastoquinol + NADP(+) + n H(+)(out). In terms of biological role, NDH shuttles electrons from NAD(P)H:plastoquinone, via FMN and iron-sulfur (Fe-S) centers, to quinones in the photosynthetic chain and possibly in a chloroplast respiratory chain. The immediate electron acceptor for the enzyme in this species is believed to be plastoquinone. Couples the redox reaction to proton translocation, and thus conserves the redox energy in a proton gradient. In Dioscorea elephantipes (Elephant's foot yam), this protein is NAD(P)H-quinone oxidoreductase subunit 4L, chloroplastic.